The sequence spans 547 residues: Apolipoprotein N-acyltransferase (547 aa).

The next 6 membrane-spanning stretches (helical) occupy residues 31–51 (PLPAWSLAPVQVIALAVAAHA), 65–85 (GWLFAMFSFSLGLYWLYVSMH), 89–109 (GLAAPLAAAGVLALSAFLALF), 144–164 (AACWAALEWLRAVVLTGFPWL), 181–201 (LLGVHGMALLAAFAAAALAGL), and 215–235 (LAAGVALLLAGAGWLLGQFSW). The region spanning 248-511 (VQGNVEQSQK…AGVLPVAVQG (264 aa)) is the CN hydrolase domain. Catalysis depends on Glu-292, which acts as the Proton acceptor. The active site involves Lys-366. Catalysis depends on Cys-416, which acts as the Nucleophile.

The protein belongs to the CN hydrolase family. Apolipoprotein N-acyltransferase subfamily.

Its subcellular location is the cell inner membrane. It carries out the reaction N-terminal S-1,2-diacyl-sn-glyceryl-L-cysteinyl-[lipoprotein] + a glycerophospholipid = N-acyl-S-1,2-diacyl-sn-glyceryl-L-cysteinyl-[lipoprotein] + a 2-acyl-sn-glycero-3-phospholipid + H(+). The protein operates within protein modification; lipoprotein biosynthesis (N-acyl transfer). Functionally, catalyzes the phospholipid dependent N-acylation of the N-terminal cysteine of apolipoprotein, the last step in lipoprotein maturation. This Bordetella bronchiseptica (strain ATCC BAA-588 / NCTC 13252 / RB50) (Alcaligenes bronchisepticus) protein is Apolipoprotein N-acyltransferase.